The chain runs to 212 residues: Thymidine kinase (212 aa).

Residues 11 to 18 (SPMNAGKT), 43 to 45 (DTR), and 86 to 89 (DEAQ) contribute to the ATP site. The active-site Proton acceptor is Glu-87. Phe-119 lines the substrate pocket. The Zn(2+) site is built by Cys-144, Cys-147, Cys-183, and Cys-186.

Belongs to the thymidine kinase family.

It catalyses the reaction thymidine + ATP = dTMP + ADP + H(+). The chain is Thymidine kinase (TK) from Encephalitozoon cuniculi (strain GB-M1) (Microsporidian parasite).